Reading from the N-terminus, the 74-residue chain is Spore germination protein GerE (74 aa).

The HTH luxR-type domain maps to 5–70 (EFQSKPLLTK…QAVVELLRMG (66 aa)). A DNA-binding region (H-T-H motif) is located at residues 29–48 (TKEIASELFISEKTVRNHIS).

Involved in the regulation of spore formation. Directs the transcription of several genes that encode structural components of the protein coat that encases the mature spore (CotB, CotC, CotG, CotS, CotV, CotW, CotX, CotY and CotZ). Also controls the cgeAB and cgeCDE operons. The chain is Spore germination protein GerE (gerE) from Bacillus subtilis (strain 168).